A 906-amino-acid polypeptide reads, in one-letter code: MLSLVQKIIGSRNERFIKKVSRIVQKINSLEPEFEKLSDEQLKAKTFEYRERLANGEILDNLLPEAFATVREAGKRTKNMRHYDVQLIGGIVLHQGKVAEMKTGEGKTLVATLPAYLNALTGDGVHVITVNDYLAKRDAELMSDIYEFLGMSVGVIVADLNPQQRKEAYACDITYGTNNEFGFDYLRDNMAYEKEQQVQRSRNYVIIDEVDSILIDEARTPLIISGASDDSSEMYNLFNRLVPYLEKQEKEEVENEQEQRDFYVDEKSKNAYLTEKGYAKIENMLKKEGILEEDDNLYSPHNITKMHYLNACLRAHSLYQLNIDYIVRDQEIVIIDESTGRAMPGRRWSDGLHQAIEAKEGVKINAENQTMASITFQNFFKLYNKIAGMTGTADTEAFELHSIYGLEVIIIPTNKPMIRKDHHDEIYGSVREKFDAIVEDIKERISKGQPVLVGTASIEASEVLSTLLKKKKIRHNVLNAKQHEKEASIIAMAGYPDNVTIATNMAGRGTDIILGGNLEVEIAQLEDPTPEDIAQIKAEWLKRNEAVKKAGGLCIIGSERHDSRRIDNQLRGRAARQGDPGESKFYLSMDDNLLRIFASQSMAERVKKGLKGGESLAFGFMSKVISKAQGKVESYHFDIRKNLLEYDNVVNTQRKVIYEQRQSLLEAEDVSDILADIRIDVAEQLFHDYVSAGSMHELWDLEGLEKALKSDFMIELDLQKLYEEDDSLGEEDLKRLVREAIEIEFVEKTKNLDSGAVRQFEKFSLLQSLDTHWREHLSSIDHLRNSINLRGYAQKDPKNEYKKEAFELFSTMLDNFKYEVISSLAKIRIATEEETQRAQQEWQESMSDIKAEHESVIDNNQRHDEDEQEEAPKVQQVRREGPKVKRNDPCPCGSGKKYKQCHGKVE.

Residues Gln86, 104–108 (GEGKT), and Asp511 each bind ATP. Basic and acidic residues-rich tracts occupy residues 853–865 (HESVIDNNQRHDE) and 877–888 (VRREGPKVKRND). Residues 853-906 (HESVIDNNQRHDEDEQEEAPKVQQVRREGPKVKRNDPCPCGSGKKYKQCHGKVE) are disordered. The Zn(2+) site is built by Cys890, Cys892, Cys901, and His902. Residues 896–906 (KKYKQCHGKVE) show a composition bias toward basic residues.

The protein belongs to the SecA family. Monomer and homodimer. Part of the essential Sec protein translocation apparatus which comprises SecA, SecYEG and auxiliary proteins SecDF-YajC and YidC. Zn(2+) is required as a cofactor.

The protein localises to the cell inner membrane. The protein resides in the cytoplasm. The enzyme catalyses ATP + H2O + cellular proteinSide 1 = ADP + phosphate + cellular proteinSide 2.. Functionally, part of the Sec protein translocase complex. Interacts with the SecYEG preprotein conducting channel. Has a central role in coupling the hydrolysis of ATP to the transfer of proteins into and across the cell membrane, serving both as a receptor for the preprotein-SecB complex and as an ATP-driven molecular motor driving the stepwise translocation of polypeptide chains across the membrane. The protein is Protein translocase subunit SecA of Francisella tularensis subsp. holarctica (strain OSU18).